The following is a 418-amino-acid chain: Tyrosine--tRNA ligase (418 aa).

Tyrosine 34 contacts L-tyrosine. Positions 39–48 (PTADSLHLGH) match the 'HIGH' region motif. L-tyrosine contacts are provided by tyrosine 169 and glutamine 173. The short motif at 229–233 (KFGKS) is the 'KMSKS' region element. Lysine 232 contacts ATP. The 67-residue stretch at 352–418 (LNIVELLVNA…GKKKNFVLTY (67 aa)) folds into the S4 RNA-binding domain.

Belongs to the class-I aminoacyl-tRNA synthetase family. TyrS type 1 subfamily. In terms of assembly, homodimer.

The protein localises to the cytoplasm. The enzyme catalyses tRNA(Tyr) + L-tyrosine + ATP = L-tyrosyl-tRNA(Tyr) + AMP + diphosphate + H(+). Its function is as follows. Catalyzes the attachment of tyrosine to tRNA(Tyr) in a two-step reaction: tyrosine is first activated by ATP to form Tyr-AMP and then transferred to the acceptor end of tRNA(Tyr). This Streptococcus thermophilus (strain ATCC BAA-491 / LMD-9) protein is Tyrosine--tRNA ligase.